A 441-amino-acid polypeptide reads, in one-letter code: Ribulose bisphosphate carboxylase large chain (441 aa).

Lys-5 is modified (N6,N6,N6-trimethyllysine). Asn-114 and Thr-164 together coordinate substrate. Lys-166 serves as the catalytic Proton acceptor. Lys-168 contacts substrate. The Mg(2+) site is built by Lys-192, Asp-194, and Glu-195. Lys-192 is subject to N6-carboxylysine. His-285 serves as the catalytic Proton acceptor. Substrate is bound by residues Arg-286, His-318, and Ser-370.

Belongs to the RuBisCO large chain family. Type I subfamily. Heterohexadecamer of 8 large chains and 8 small chains; disulfide-linked. The disulfide link is formed within the large subunit homodimers. The cofactor is Mg(2+). The disulfide bond which can form in the large chain dimeric partners within the hexadecamer appears to be associated with oxidative stress and protein turnover.

The protein resides in the plastid. It is found in the chloroplast. It catalyses the reaction 2 (2R)-3-phosphoglycerate + 2 H(+) = D-ribulose 1,5-bisphosphate + CO2 + H2O. The enzyme catalyses D-ribulose 1,5-bisphosphate + O2 = 2-phosphoglycolate + (2R)-3-phosphoglycerate + 2 H(+). RuBisCO catalyzes two reactions: the carboxylation of D-ribulose 1,5-bisphosphate, the primary event in carbon dioxide fixation, as well as the oxidative fragmentation of the pentose substrate in the photorespiration process. Both reactions occur simultaneously and in competition at the same active site. The chain is Ribulose bisphosphate carboxylase large chain from Argyrochosma delicatula (Delicate cloak fern).